Consider the following 208-residue polypeptide: Protein GrpE (208 aa).

The span at 1–12 shows a compositional bias: basic and acidic residues; it reads MTNKDESVEKNT. The tract at residues 1–59 is disordered; that stretch reads MTNKDESVEKNTESTVEETNIKQNIDDSVEQAEESKGHLQDEAIEETSDENVIEEIDPK. Over residues 13–23 the composition is skewed to polar residues; sequence ESTVEETNIKQ. The segment covering 42–55 has biased composition (acidic residues); it reads EAIEETSDENVIEE.

This sequence belongs to the GrpE family. As to quaternary structure, homodimer.

The protein resides in the cytoplasm. Participates actively in the response to hyperosmotic and heat shock by preventing the aggregation of stress-denatured proteins, in association with DnaK and GrpE. It is the nucleotide exchange factor for DnaK and may function as a thermosensor. Unfolded proteins bind initially to DnaJ; upon interaction with the DnaJ-bound protein, DnaK hydrolyzes its bound ATP, resulting in the formation of a stable complex. GrpE releases ADP from DnaK; ATP binding to DnaK triggers the release of the substrate protein, thus completing the reaction cycle. Several rounds of ATP-dependent interactions between DnaJ, DnaK and GrpE are required for fully efficient folding. The sequence is that of Protein GrpE from Staphylococcus aureus (strain Mu3 / ATCC 700698).